The sequence spans 577 residues: Peroxynitrite isomerase THAP4 (577 aa).

The segment at 1–85 (MVICCAAVNC…LKPTAVPSIF (85 aa)) adopts a THAP-type zinc-finger fold. Residues 84 to 221 (IFHLTEKKRG…DKSGISMDDF (138 aa)) are disordered. Low complexity predominate over residues 157–170 (AAQEAASQEQAQQA). Phosphoserine is present on Ser-163. An HCFC1-binding motif (HBM) motif is present at residues 235-238 (LHSY). The residue at position 239 (Ser-239) is a Phosphoserine. Residues 240-324 (FSSKHTRERP…AVQSEHSDAS (85 aa)) form a disordered region. Basic and acidic residues predominate over residues 247–266 (ERPSVPREPIDRKRLKKDVE). A compositionally biased stretch (low complexity) spans 290 to 300 (TATPQKPSQSP). The segment at 415–577 (PPKMNPVVEP…LHVTYKKVTP (163 aa)) is nitrobindin. Heme b is bound by residues Thr-444 and His-567.

It in the C-terminal section; belongs to the nitrobindin family. As to quaternary structure, homodimer. It depends on heme b as a cofactor.

It localises to the cytoplasm. The protein localises to the nucleus. The enzyme catalyses peroxynitrite = nitrate. Its pathway is nitrogen metabolism. Functionally, heme-binding protein able to scavenge peroxynitrite and to protect free L-tyrosine against peroxynitrite-mediated nitration, by acting as a peroxynitrite isomerase that converts peroxynitrite to nitrate. Therefore, this protein likely plays a role in peroxynitrite sensing and in the detoxification of reactive nitrogen and oxygen species (RNS and ROS, respectively). Is able to bind nitric oxide (NO) in vitro, but may act as a sensor of peroxynitrite levels in vivo, possibly modulating the transcriptional activity residing in the N-terminal region. The polypeptide is Peroxynitrite isomerase THAP4 (Homo sapiens (Human)).